Here is a 117-residue protein sequence, read N- to C-terminus: Holo-[acyl-carrier-protein] synthase (117 aa).

Positions 8 and 58 each coordinate Mg(2+).

It belongs to the P-Pant transferase superfamily. AcpS family. Requires Mg(2+) as cofactor.

Its subcellular location is the cytoplasm. The catalysed reaction is apo-[ACP] + CoA = holo-[ACP] + adenosine 3',5'-bisphosphate + H(+). Transfers the 4'-phosphopantetheine moiety from coenzyme A to a Ser of acyl-carrier-protein. This chain is Holo-[acyl-carrier-protein] synthase, found in Shouchella clausii (strain KSM-K16) (Alkalihalobacillus clausii).